The following is a 479-amino-acid chain: Glutamyl-tRNA(Gln) amidotransferase subunit A (479 aa).

Catalysis depends on charge relay system residues Lys71 and Ser146. Ser170 functions as the Acyl-ester intermediate in the catalytic mechanism.

The protein belongs to the amidase family. GatA subfamily. As to quaternary structure, heterotrimer of A, B and C subunits.

The catalysed reaction is L-glutamyl-tRNA(Gln) + L-glutamine + ATP + H2O = L-glutaminyl-tRNA(Gln) + L-glutamate + ADP + phosphate + H(+). Its function is as follows. Allows the formation of correctly charged Gln-tRNA(Gln) through the transamidation of misacylated Glu-tRNA(Gln) in organisms which lack glutaminyl-tRNA synthetase. The reaction takes place in the presence of glutamine and ATP through an activated gamma-phospho-Glu-tRNA(Gln). This is Glutamyl-tRNA(Gln) amidotransferase subunit A from Lactobacillus johnsonii (strain CNCM I-12250 / La1 / NCC 533).